Consider the following 150-residue polypeptide: Transcription antitermination protein NusB (150 aa).

It belongs to the NusB family.

Its function is as follows. Involved in transcription antitermination. Required for transcription of ribosomal RNA (rRNA) genes. Binds specifically to the boxA antiterminator sequence of the ribosomal RNA (rrn) operons. This Streptococcus pyogenes serotype M4 (strain MGAS10750) protein is Transcription antitermination protein NusB.